The primary structure comprises 334 residues: GTPase Obg (334 aa).

The region spanning 1 to 159 (MKFIDQAIIH…RDIQLELMLL (159 aa)) is the Obg domain. The interval 67-86 (AQNGQNGSSRKSSGKKGDDI) is disordered. Low complexity predominate over residues 68 to 77 (QNGQNGSSRK). The OBG-type G domain occupies 160–333 (ADVGTLGMPN…LCSDITKYLK (174 aa)). Residues 166–173 (GMPNVGKS), 191–195 (FTTLH), 213–216 (DIPG), 283–286 (NKID), and 314–316 (SSM) contribute to the GTP site. Residues serine 173 and threonine 193 each contribute to the Mg(2+) site.

This sequence belongs to the TRAFAC class OBG-HflX-like GTPase superfamily. OBG GTPase family. In terms of assembly, monomer. The cofactor is Mg(2+).

The protein localises to the cytoplasm. In terms of biological role, an essential GTPase which binds GTP, GDP and possibly (p)ppGpp with moderate affinity, with high nucleotide exchange rates and a fairly low GTP hydrolysis rate. Plays a role in control of the cell cycle, stress response, ribosome biogenesis and in those bacteria that undergo differentiation, in morphogenesis control. In Buchnera aphidicola subsp. Acyrthosiphon pisum (strain 5A), this protein is GTPase Obg.